Reading from the N-terminus, the 190-residue chain is Elongation factor P 2 (190 aa).

It belongs to the elongation factor P family.

The protein resides in the cytoplasm. The protein operates within protein biosynthesis; polypeptide chain elongation. In terms of biological role, involved in peptide bond synthesis. Stimulates efficient translation and peptide-bond synthesis on native or reconstituted 70S ribosomes in vitro. Probably functions indirectly by altering the affinity of the ribosome for aminoacyl-tRNA, thus increasing their reactivity as acceptors for peptidyl transferase. The protein is Elongation factor P 2 (efp2) of Chlamydia caviae (strain ATCC VR-813 / DSM 19441 / 03DC25 / GPIC) (Chlamydophila caviae).